The chain runs to 93 residues: UPF0473 protein CHY_0543 (93 aa).

The protein belongs to the UPF0473 family.

This is UPF0473 protein CHY_0543 from Carboxydothermus hydrogenoformans (strain ATCC BAA-161 / DSM 6008 / Z-2901).